Reading from the N-terminus, the 289-residue chain is BTB/POZ domain-containing protein KCTD7 (289 aa).

The tract at residues 1–42 is disordered; that stretch reads MVVVNGREPDSRHSDGAMSSSEAEDDFLEPATPTATQAGHGL. In terms of domain architecture, BTB spans 53 to 141; it reads VPLNIGGAHF…YAIGPLLEQL (89 aa).

Interacts with CUL3.

The protein resides in the cell membrane. It is found in the cytoplasm. The protein localises to the cytosol. In terms of biological role, may be involved in the control of excitability of cortical neurons. The chain is BTB/POZ domain-containing protein KCTD7 (Kctd7) from Rattus norvegicus (Rat).